A 125-amino-acid polypeptide reads, in one-letter code: Urotensin-2 (125 aa).

The first 20 residues, 1 to 20 (MYKLASCCLLFIGFLNPLFS), serve as a signal peptide directing secretion. The propeptide occupies 21-111 (LPLLDSGEVS…HLLARIRKPY (91 aa)). The cysteines at positions 119 and 124 are disulfide-linked.

This sequence belongs to the urotensin-2 family.

The protein resides in the secreted. In terms of biological role, highly potent vasoconstrictor. The polypeptide is Urotensin-2 (UTS2) (Macaca mulatta (Rhesus macaque)).